A 171-amino-acid chain; its full sequence is MAEKRNIFLVGPMGAGKSTIGRHLAQMLHLEFHDSDQEIESRTGADIAWVFDVEGEEGFRRREAQVIADLTEKQGIVLATGGGSVQSKDIRNYLSARGIVVYLETTIDKQVARTQRDKRRPLLQVDDPRSVLETLAESRNPLYEEIADVIVKTDDQSAKVVANQIIEQLGF.

14–19 (GAGKST) provides a ligand contact to ATP. Position 18 (S18) interacts with Mg(2+). Residues D36, R60, and G82 each coordinate substrate. R120 contributes to the ATP binding site. R139 is a substrate binding site. Residue Q156 coordinates ATP.

It belongs to the shikimate kinase family. As to quaternary structure, monomer. Requires Mg(2+) as cofactor.

It localises to the cytoplasm. It carries out the reaction shikimate + ATP = 3-phosphoshikimate + ADP + H(+). It functions in the pathway metabolic intermediate biosynthesis; chorismate biosynthesis; chorismate from D-erythrose 4-phosphate and phosphoenolpyruvate: step 5/7. Its function is as follows. Catalyzes the specific phosphorylation of the 3-hydroxyl group of shikimic acid using ATP as a cosubstrate. The polypeptide is Shikimate kinase (Shewanella amazonensis (strain ATCC BAA-1098 / SB2B)).